Consider the following 313-residue polypeptide: L-lactate dehydrogenase 1 (313 aa).

Val15, Asp36, Arg41, and Tyr66 together coordinate NAD(+). Substrate is bound by residues Gln83, Arg89, and 121–124 (NPVD). Residues 119-121 (ASN) and Ser144 each bind NAD(+). Residue 149 to 152 (DTAR) participates in substrate binding. 2 residues coordinate beta-D-fructose 1,6-bisphosphate: Arg154 and His169. Residue His176 is the Proton acceptor of the active site. Tyr218 carries the post-translational modification Phosphotyrosine. Position 227 (Thr227) interacts with substrate.

Belongs to the LDH/MDH superfamily. LDH family. In terms of assembly, homotetramer.

It localises to the cytoplasm. The catalysed reaction is (S)-lactate + NAD(+) = pyruvate + NADH + H(+). It functions in the pathway fermentation; pyruvate fermentation to lactate; (S)-lactate from pyruvate: step 1/1. With respect to regulation, allosterically activated by fructose 1,6-bisphosphate (FBP). In terms of biological role, catalyzes the conversion of lactate to pyruvate. The sequence is that of L-lactate dehydrogenase 1 from Listeria innocua serovar 6a (strain ATCC BAA-680 / CLIP 11262).